Here is a 338-residue protein sequence, read N- to C-terminus: Ketol-acid reductoisomerase (NADP(+)) (338 aa).

The KARI N-terminal Rossmann domain occupies 1 to 181; the sequence is MKVFYDKDCD…GGGRTGIIET (181 aa). NADP(+)-binding positions include 24 to 27, arginine 47, serine 50, threonine 52, and 82 to 85; these read YGSQ and DEFQ. Residue histidine 107 is part of the active site. An NADP(+)-binding site is contributed by glycine 133. The KARI C-terminal knotted domain maps to 182–327; the sequence is TFKDETETDL…EQLRSMMPWI (146 aa). Mg(2+) contacts are provided by aspartate 190, glutamate 194, glutamate 226, and glutamate 230. Serine 251 contributes to the substrate binding site.

It belongs to the ketol-acid reductoisomerase family. Mg(2+) is required as a cofactor.

The catalysed reaction is (2R)-2,3-dihydroxy-3-methylbutanoate + NADP(+) = (2S)-2-acetolactate + NADPH + H(+). The enzyme catalyses (2R,3R)-2,3-dihydroxy-3-methylpentanoate + NADP(+) = (S)-2-ethyl-2-hydroxy-3-oxobutanoate + NADPH + H(+). The protein operates within amino-acid biosynthesis; L-isoleucine biosynthesis; L-isoleucine from 2-oxobutanoate: step 2/4. It participates in amino-acid biosynthesis; L-valine biosynthesis; L-valine from pyruvate: step 2/4. Involved in the biosynthesis of branched-chain amino acids (BCAA). Catalyzes an alkyl-migration followed by a ketol-acid reduction of (S)-2-acetolactate (S2AL) to yield (R)-2,3-dihydroxy-isovalerate. In the isomerase reaction, S2AL is rearranged via a Mg-dependent methyl migration to produce 3-hydroxy-3-methyl-2-ketobutyrate (HMKB). In the reductase reaction, this 2-ketoacid undergoes a metal-dependent reduction by NADPH to yield (R)-2,3-dihydroxy-isovalerate. In Pseudomonas putida (strain W619), this protein is Ketol-acid reductoisomerase (NADP(+)).